Here is a 334-residue protein sequence, read N- to C-terminus: AT-hook motif nuclear-localized protein 2 (334 aa).

The span at 1-21 shows a compositional bias: low complexity; that stretch reads METTGEVVKTTTGSDGGVTVV. Disordered stretches follow at residues 1–103 and 109–128; these read METT…PTTS and STTS…PSSF. Pro residues predominate over residues 44-54; sequence SVAPPPPPPPQ. A compositionally biased stretch (basic residues) spans 71–80; the sequence is IKKRRGRPRK. Positions 72-80 match the Bipartite nuclear localization signal motif; it reads KKRRGRPRK. A DNA-binding region (a.T hook) is located at residues 72-84; that stretch reads KKRRGRPRKYGHD. The segment covering 90 to 103 has biased composition (polar residues); it reads LSPNPISSAAPTTS. The region spanning 147–287 is the PPC domain; the sequence is AANFTPHIIT…PHNHNFMSSP (141 aa). Residues 306 to 319 are compositionally biased toward polar residues; sequence SSLPISTWTPSFPS. The segment at 306-334 is disordered; sequence SSLPISTWTPSFPSDSRHKHSHDFNITLT.

The protein resides in the nucleus. Its function is as follows. Transcription factor that specifically binds AT-rich DNA sequences related to the nuclear matrix attachment regions (MARs). This chain is AT-hook motif nuclear-localized protein 2, found in Arabidopsis thaliana (Mouse-ear cress).